The primary structure comprises 856 residues: Rod cGMP-specific 3',5'-cyclic phosphodiesterase subunit beta (856 aa).

Ser2 carries the post-translational modification N-acetylserine. GAF domains are found at residues 71–220 (NMER…TLNL) and 252–429 (DIER…GWSV). The PDEase domain maps to 481 to 814 (EEDELGILLK…KEWKALADEY (334 aa)). Residue His557 is the Proton donor of the active site. Positions 561, 597, 598, and 718 each coordinate a divalent metal cation. A compositionally biased stretch (basic and acidic residues) spans 823-833 (EEKQQQEDRTT). A disordered region spans residues 823-842 (EEKQQQEDRTTAKKAGTEIC). Cys853 carries S-geranylgeranyl cysteine lipidation. Residues 854-856 (CIL) constitute a propeptide, removed in mature form.

Belongs to the cyclic nucleotide phosphodiesterase family. In terms of assembly, oligomer composed of two catalytic chains (alpha and beta), an inhibitory chain (gamma) and the delta chain. A divalent metal cation serves as cofactor.

It localises to the membrane. The protein resides in the cell projection. Its subcellular location is the cilium. The protein localises to the photoreceptor outer segment. The enzyme catalyses 3',5'-cyclic GMP + H2O = GMP + H(+). In terms of biological role, rod-specific cGMP phosphodiesterase that catalyzes the hydrolysis of 3',5'-cyclic GMP. Necessary for the formation of a functional phosphodiesterase holoenzyme. Involved in retinal circadian rhythm photoentrainment via modulation of UVA and orange light-induced phase-shift of the retina clock. May participate in processes of transmission and amplification of the visual signal. The chain is Rod cGMP-specific 3',5'-cyclic phosphodiesterase subunit beta from Canis lupus familiaris (Dog).